A 66-amino-acid chain; its full sequence is Beta-toxin Chui3 (66 aa).

Residues 1–66 (KEGYLVELGT…VWPLKNKTCR (66 aa)) form the LCN-type CS-alpha/beta domain. Disulfide bonds link Cys-12-Cys-65, Cys-16-Cys-41, Cys-25-Cys-46, and Cys-29-Cys-48.

It belongs to the long (4 C-C) scorpion toxin superfamily. Sodium channel inhibitor family. Beta subfamily. In terms of tissue distribution, expressed by the venom gland.

It is found in the secreted. Functionally, beta toxins bind voltage-independently at site-4 of sodium channels (Nav) and shift the voltage of activation toward more negative potentials thereby affecting sodium channel activation and promoting spontaneous and repetitive firing. Acts on human sodium channel Nav1.6/SCN8A. The polypeptide is Beta-toxin Chui3 (Centruroides huichol (Scorpion)).